The primary structure comprises 199 residues: Prostatic spermine-binding protein (199 aa).

An N-terminal signal peptide occupies residues 1–18 (MLLLLTLAFLASPTCRAQ). Residues 19–151 (NVLGNAAGKY…VRGIGFKWGN (133 aa)) enclose the Jacalin-type lectin domain. A glycan (N-linked (GlcNAc...) asparagine) is linked at Asn62. The segment at 159-199 (HYNNKEDKADNKDADNKDADNKDDGDEDDDGNDDDDQKDES) is disordered. Basic and acidic residues predominate over residues 160-180 (YNNKEDKADNKDADNKDADNK). Over residues 181 to 199 (DDGDEDDDGNDDDDQKDES) the composition is skewed to acidic residues.

This sequence to rat SBP. As to expression, prostate.

Functionally, this protein seems to be functional equivalent to rat prostatic spermine-binding protein, which is involved in polyamine binding. This Mus musculus (Mouse) protein is Prostatic spermine-binding protein (Sbp).